A 130-amino-acid chain; its full sequence is Phosphoribosyl-AMP cyclohydrolase (130 aa).

Asp-77 is a Mg(2+) binding site. Position 78 (Cys-78) interacts with Zn(2+). Residues Asp-79 and Asp-81 each contribute to the Mg(2+) site. Zn(2+)-binding residues include Cys-95 and Cys-102.

The protein belongs to the PRA-CH family. In terms of assembly, homodimer. It depends on Mg(2+) as a cofactor. Zn(2+) is required as a cofactor.

It localises to the cytoplasm. The catalysed reaction is 1-(5-phospho-beta-D-ribosyl)-5'-AMP + H2O = 1-(5-phospho-beta-D-ribosyl)-5-[(5-phospho-beta-D-ribosylamino)methylideneamino]imidazole-4-carboxamide. It functions in the pathway amino-acid biosynthesis; L-histidine biosynthesis; L-histidine from 5-phospho-alpha-D-ribose 1-diphosphate: step 3/9. Catalyzes the hydrolysis of the adenine ring of phosphoribosyl-AMP. In Pseudomonas syringae pv. tomato (strain ATCC BAA-871 / DC3000), this protein is Phosphoribosyl-AMP cyclohydrolase.